The primary structure comprises 142 residues: Large ribosomal subunit protein uL13 (142 aa).

It belongs to the universal ribosomal protein uL13 family. In terms of assembly, part of the 50S ribosomal subunit.

This protein is one of the early assembly proteins of the 50S ribosomal subunit, although it is not seen to bind rRNA by itself. It is important during the early stages of 50S assembly. This is Large ribosomal subunit protein uL13 from Maridesulfovibrio salexigens (strain ATCC 14822 / DSM 2638 / NCIMB 8403 / VKM B-1763) (Desulfovibrio salexigens).